Reading from the N-terminus, the 92-residue chain is uncharacterized protein (92 aa).

A compositionally biased stretch (basic and acidic residues) spans 1-10 (MGLLKKKDST). Residues 1–21 (MGLLKKKDSTSARSSTSPCAD) form a disordered region. The CHCH domain maps to 16-66 (TSPCADLRNAYHNCFNKWYSEKFVKGQWDKEECVAEWKKYRDCLSENLDGK). 2 consecutive short sequence motifs (cx9C motif) follow at residues 19–29 (CADLRNAYHNC) and 48–58 (CVAEWKKYRDC). Intrachain disulfides connect Cys19-Cys58 and Cys29-Cys48.

The protein belongs to the TRIAP1/MDM35 family.

This is an uncharacterized protein from Arabidopsis thaliana (Mouse-ear cress).